A 327-amino-acid chain; its full sequence is DNA-directed RNA polymerase subunit alpha (327 aa).

Residues 1–233 form an alpha N-terminal domain (alpha-NTD) region; it reads MQNVLKSFLT…HQLAAFVDLK (233 aa). Residues 247-327 are alpha C-terminal domain (alpha-CTD); sequence VNPLLLRPVE…GWPPADLTDQ (81 aa).

It belongs to the RNA polymerase alpha chain family. Homodimer. The RNAP catalytic core consists of 2 alpha, 1 beta, 1 beta' and 1 omega subunit. When a sigma factor is associated with the core the holoenzyme is formed, which can initiate transcription.

It catalyses the reaction RNA(n) + a ribonucleoside 5'-triphosphate = RNA(n+1) + diphosphate. In terms of biological role, DNA-dependent RNA polymerase catalyzes the transcription of DNA into RNA using the four ribonucleoside triphosphates as substrates. The protein is DNA-directed RNA polymerase subunit alpha of Coxiella burnetii (strain CbuK_Q154) (Coxiella burnetii (strain Q154)).